The primary structure comprises 210 residues: uncharacterized protein (210 aa).

Transmembrane regions (helical) follow at residues 42–62 (ITLG…VLFV), 66–86 (ALHG…GFLM), 126–146 (VVVY…EMWQ), 147–167 (IILA…VISL), and 189–209 (AGIV…NEII).

It belongs to the Rht family.

The protein resides in the cell membrane. This is an uncharacterized protein from Haemophilus influenzae (strain ATCC 51907 / DSM 11121 / KW20 / Rd).